The following is a 189-amino-acid chain: Cytidylate kinase (189 aa).

7 to 15 contacts ATP; that stretch reads GPPGSGKTS.

This sequence belongs to the cytidylate kinase family. Type 2 subfamily.

The protein localises to the cytoplasm. The catalysed reaction is CMP + ATP = CDP + ADP. It carries out the reaction dCMP + ATP = dCDP + ADP. In Saccharolobus islandicus (strain L.S.2.15 / Lassen #1) (Sulfolobus islandicus), this protein is Cytidylate kinase.